Here is an 89-residue protein sequence, read N- to C-terminus: Neurotoxin beta-KTx 52.1 (89 aa).

The N-terminal stretch at 1-20 is a signal peptide; sequence MKQYIFFLALIVLTATFAEA. Positions 21–39 are excised as a propeptide; the sequence is GKKTEILDKVKKVFSKAKD. Residues 53 to 89 form the BetaSPN-type CS-alpha/beta domain; it reads ELGCPFIDKWCEDHCDSKKLVGKCENFDCSCVKLGGK. Disulfide bonds link C56–C76, C63–C81, and C67–C83.

This sequence belongs to the long chain scorpion toxin family. Class 2 subfamily. As to expression, expressed by the venom gland.

It is found in the secreted. In terms of biological role, inhibits voltage-gated potassium channel. This Lychas mucronatus (Chinese swimming scorpion) protein is Neurotoxin beta-KTx 52.1.